We begin with the raw amino-acid sequence, 779 residues long: MEDLKTTDALSLPVVSDNGGIIEPELQLPQAIPTELENNEEENGTIQQSQSEEDSAENGKIYMDDTFLPSKSQVKETQDSPTTPSFVSPSAEIVLPRVNTKYEAEGTTRNAVSPRPLYSPRSIGSPRALLSPRFAGSSSPLSNGTPISMDSFRDSIDTASPFESVKEAVSKFGGITDWKAHRMKVLERRNFVEQELDKIQEEIPEYKKKSEMVEMSKMLAVEELESTKRLIEELKLNLEKAETEEQQAKQDSELAKLRVQEMEQGIADEASVASKAQLEVAQARHTSAISELESVKEELQTLQNEYDALVKEKDLAVKEAEEAVIASKEVERKVEELTIELIATKESLECAHSSHLEAEEHRIGAAMLRDQETHRWEKELKQAEEELQRLKQHLVSTKELQVKLEFASALLLDLKKELADHKESSKVKEETSETVVTNIEISLQEKTTDIQKAVASAKKELEEVNANVEKATSEVNCLKVASSSLRLEIDKEKSALDSLKQREGMASVTVASLEAEIDITRCEIALVKSKEKETREEMVELPKQLQQASQEADEAKSFAELAREELRKSQEEAEQAKAGASTMESRLFAAQKEIEAIKASERLALAAIKALQESESSSKENAVDSPRTVTLTIEEYYELSKRAHEAEEAANARVAAAVSEVGEAKETEKRSLEKLEEVNKEMVERKATLAGAMEKAEKAKEGKLGVEQELRKWREVSEKKRKNGSSHGKSIQGSKEKEAETSVSNETETNPIPQVNPVKKKKKLFPRFFMFLMKKKSHK.

Residues 1 to 119 (MEDLKTTDAL…NAVSPRPLYS (119 aa)) are disordered. Polar residues predominate over residues 79-88 (DSPTTPSFVS). S139 is modified (phosphoserine). Coiled-coil stretches lie at residues 182 to 503 (RMKV…KQRE), 532 to 587 (KETR…ESRL), and 657 to 715 (AVSE…KWRE). The segment covering 650-661 (ANARVAAAVSEV) has biased composition (low complexity). 2 disordered regions span residues 650–674 (ANAR…SLEK) and 694–759 (EKAE…NPVK). Composition is skewed to basic and acidic residues over residues 662–674 (GEAK…SLEK) and 694–718 (EKAE…EVSE). Positions 741 to 753 (TSVSNETETNPIP) are enriched in polar residues.

This sequence belongs to the WEB family.

The polypeptide is Protein WEAK CHLOROPLAST MOVEMENT UNDER BLUE LIGHT-like 1 (WEL1) (Arabidopsis thaliana (Mouse-ear cress)).